The chain runs to 131 residues: Glycine cleavage system H protein (131 aa).

The region spanning 24 to 106 (RVTVGISDHA…YGEGWIFVVE (83 aa)) is the Lipoyl-binding domain. An N6-lipoyllysine modification is found at lysine 65.

The protein belongs to the GcvH family. In terms of assembly, the glycine cleavage system is composed of four proteins: P, T, L and H. (R)-lipoate is required as a cofactor.

The glycine cleavage system catalyzes the degradation of glycine. The H protein shuttles the methylamine group of glycine from the P protein to the T protein. The polypeptide is Glycine cleavage system H protein (Xanthomonas axonopodis pv. citri (strain 306)).